Reading from the N-terminus, the 580-residue chain is Trafficking protein particle complex subunit 14 (580 aa).

2 disordered regions span residues 90–138 and 480–533; these read GMPG…ATTL and VSHP…RSGS. Positions 105-116 are enriched in gly residues; the sequence is PGGGDPGGGGLF. Over residues 124-137 the composition is skewed to low complexity; it reads THGPGPATSGGATT. Phosphoserine is present on S491. Residues 492–502 are compositionally biased toward low complexity; the sequence is RKSSPSSPAVR. Positions 512-525 are enriched in polar residues; sequence LGRSQSFSHQQPSR. S517 is subject to Phosphoserine. Residue T541 is modified to Phosphothreonine. S546 bears the Phosphoserine mark.

Component of the multisubunit TRAPP II complex, which includes at least TRAPPC1, TRAPPC2, TRAPPC2L, TRAPPC3, TRAPPC4, TRAPPC5, TRAPPC6A/B, TRAPPC9, TRAPPC10 and TRAPPC14. TRAPPC9, TRAPPC10 and TRAPPC14 are specific subunits of the TRAPP II complex. Interacts with alpha-tubulin during mitosis. Interacts with RAB3IP (via the N-terminal region); this interaction mediates RAB3IP association with the TRAPP II complex. Interacts with TRAPPC10. Interacts with FBF1. As to expression, broadly expressed. High levels in brain, cerebellum, testis and whole blood.

It localises to the cytoplasm. It is found in the cytoskeleton. Its subcellular location is the spindle. The protein resides in the vesicle. The protein localises to the midbody. Specific subunit of the TRAPP (transport protein particle) II complex, a highly conserved vesicle tethering complex that functions in late Golgi trafficking as a membrane tether. TRAPP II complex also has GEF activity toward RAB1A. TRAPPC14 is dispensable for TRAPPII complex integrity but mediates RAB3IP preciliary vesicle trafficking to the mother centriole during ciliogenesis. Modulates YAP1 activity as transcriptional regulator. This is Trafficking protein particle complex subunit 14 from Homo sapiens (Human).